A 212-amino-acid polypeptide reads, in one-letter code: Interleukin-6 (212 aa).

Positions 1–29 are cleaved as a signal peptide; it reads MTSFSTSAFRPVAFSLGLLLVMPAAFPAP. Cysteine 72 and cysteine 78 form a disulfide bridge. N-linked (GlcNAc...) asparagine glycosylation occurs at asparagine 73. Serine 81 is subject to Phosphoserine. A disulfide bond links cysteine 101 and cysteine 111. Asparagine 160 and asparagine 172 each carry an N-linked (GlcNAc...) asparagine glycan.

This sequence belongs to the IL-6 superfamily. Component of a hexamer of two molecules each of IL6, IL6R and IL6ST; first binds to IL6R to associate with the signaling subunit IL6ST. Interacts with IL6R (via the N-terminal ectodomain); this interaction may be affected by IL6R-binding with SORL1, hence decreasing IL6 cis signaling. Interacts with SORL1 (via the N-terminal ectodomain); this interaction leads to IL6 internalization and lysosomal degradation. May form a trimeric complex with the soluble SORL1 ectodomain and soluble IL6R receptor; this interaction might stabilize circulating IL6, hence promoting IL6 trans signaling.

Its subcellular location is the secreted. Its function is as follows. Cytokine with a wide variety of biological functions in immunity, tissue regeneration, and metabolism. Binds to IL6R, then the complex associates to the signaling subunit IL6ST/gp130 to trigger the intracellular IL6-signaling pathway. The interaction with the membrane-bound IL6R and IL6ST stimulates 'classic signaling', whereas the binding of IL6 and soluble IL6R to IL6ST stimulates 'trans-signaling'. Alternatively, 'cluster signaling' occurs when membrane-bound IL6:IL6R complexes on transmitter cells activate IL6ST receptors on neighboring receiver cells. In terms of biological role, IL6 is a potent inducer of the acute phase response. Rapid production of IL6 contributes to host defense during infection and tissue injury, but excessive IL6 synthesis is involved in disease pathology. In the innate immune response, is synthesized by myeloid cells, such as macrophages and dendritic cells, upon recognition of pathogens through toll-like receptors (TLRs) at the site of infection or tissue injury. In the adaptive immune response, is required for the differentiation of B cells into immunoglobulin-secreting cells. Plays a major role in the differentiation of CD4(+) T cell subsets. Essential factor for the development of T follicular helper (Tfh) cells that are required for the induction of germinal-center formation. Required to drive naive CD4(+) T cells to the Th17 lineage. Also required for proliferation of myeloma cells and the survival of plasmablast cells. Functionally, acts as an essential factor in bone homeostasis and on vessels directly or indirectly by induction of VEGF, resulting in increased angiogenesis activity and vascular permeability. Induces, through 'trans-signaling' and synergistically with IL1B and TNF, the production of VEGF. Involved in metabolic controls, is discharged into the bloodstream after muscle contraction increasing lipolysis and improving insulin resistance. 'Trans-signaling' in central nervous system also regulates energy and glucose homeostasis. Mediates, through GLP-1, crosstalk between insulin-sensitive tissues, intestinal L cells and pancreatic islets to adapt to changes in insulin demand. Also acts as a myokine. Plays a protective role during liver injury, being required for maintenance of tissue regeneration. Also has a pivotal role in iron metabolism by regulating HAMP/hepcidin expression upon inflammation or bacterial infection. Through activation of IL6ST-YAP-NOTCH pathway, induces inflammation-induced epithelial regeneration. This Saimiri sciureus (Common squirrel monkey) protein is Interleukin-6 (IL6).